The following is a 508-amino-acid chain: 2,3-bisphosphoglycerate-independent phosphoglycerate mutase (508 aa).

Positions 11 and 61 each coordinate Mn(2+). Ser61 acts as the Phosphoserine intermediate in catalysis. Substrate is bound by residues His122, 150 to 151, Arg182, Arg188, 257 to 260, and Lys332; these read RD and RPDR. Residues Asp397, His401, Asp438, His439, and His456 each contribute to the Mn(2+) site.

Belongs to the BPG-independent phosphoglycerate mutase family. In terms of assembly, monomer. The cofactor is Mn(2+).

It carries out the reaction (2R)-2-phosphoglycerate = (2R)-3-phosphoglycerate. The protein operates within carbohydrate degradation; glycolysis; pyruvate from D-glyceraldehyde 3-phosphate: step 3/5. Its function is as follows. Catalyzes the interconversion of 2-phosphoglycerate and 3-phosphoglycerate. In Mycoplasma pneumoniae (strain ATCC 29342 / M129 / Subtype 1) (Mycoplasmoides pneumoniae), this protein is 2,3-bisphosphoglycerate-independent phosphoglycerate mutase.